A 335-amino-acid chain; its full sequence is Ferrochelatase (335 aa).

2 residues coordinate Fe cation: His-207 and Glu-288.

The protein belongs to the ferrochelatase family.

The protein resides in the cytoplasm. It catalyses the reaction heme b + 2 H(+) = protoporphyrin IX + Fe(2+). It participates in porphyrin-containing compound metabolism; protoheme biosynthesis; protoheme from protoporphyrin-IX: step 1/1. Functionally, catalyzes the ferrous insertion into protoporphyrin IX. This chain is Ferrochelatase, found in Helicobacter pylori (strain HPAG1).